The following is a 311-amino-acid chain: tRNA-cytidine(32) 2-sulfurtransferase (311 aa).

The PP-loop motif signature appears at 47 to 52 (SGGKDS). Residues Cys-122, Cys-125, and Cys-213 each contribute to the [4Fe-4S] cluster site.

It belongs to the TtcA family. In terms of assembly, homodimer. Mg(2+) serves as cofactor. [4Fe-4S] cluster is required as a cofactor.

The protein resides in the cytoplasm. It carries out the reaction cytidine(32) in tRNA + S-sulfanyl-L-cysteinyl-[cysteine desulfurase] + AH2 + ATP = 2-thiocytidine(32) in tRNA + L-cysteinyl-[cysteine desulfurase] + A + AMP + diphosphate + H(+). It participates in tRNA modification. Functionally, catalyzes the ATP-dependent 2-thiolation of cytidine in position 32 of tRNA, to form 2-thiocytidine (s(2)C32). The sulfur atoms are provided by the cysteine/cysteine desulfurase (IscS) system. This chain is tRNA-cytidine(32) 2-sulfurtransferase, found in Salmonella typhimurium (strain LT2 / SGSC1412 / ATCC 700720).